Reading from the N-terminus, the 291-residue chain is ATP synthase gamma chain (291 aa).

It belongs to the ATPase gamma chain family. As to quaternary structure, F-type ATPases have 2 components, CF(1) - the catalytic core - and CF(0) - the membrane proton channel. CF(1) has five subunits: alpha(3), beta(3), gamma(1), delta(1), epsilon(1). CF(0) has three main subunits: a, b and c.

Its subcellular location is the cell inner membrane. Functionally, produces ATP from ADP in the presence of a proton gradient across the membrane. The gamma chain is believed to be important in regulating ATPase activity and the flow of protons through the CF(0) complex. The sequence is that of ATP synthase gamma chain from Methylibium petroleiphilum (strain ATCC BAA-1232 / LMG 22953 / PM1).